The sequence spans 898 residues: Conserved oligomeric Golgi complex subunit 5 (898 aa).

The disordered stretch occupies residues 1–30; that stretch reads MNNNNNNNEGVSSSSSSSSSPLPNISSPNL. The stretch at 129-192 forms a coiled coil; sequence DTLKLGVSNL…VKKLKNHLQA (64 aa). Disordered stretches follow at residues 311 to 339, 519 to 551, and 679 to 705; these read NNNNSNNNITTNNNNNNYNNNNNNNNNNN, SNNSNSNSNNSIESSLSTSSSSSSSSSSSSSTT, and STGGVNNNSNSNNNNEIITINENSKPT. Residues 679-702 show a composition bias toward low complexity; it reads STGGVNNNSNSNNNNEIITINENS.

The protein localises to the golgi apparatus membrane. In Dictyostelium discoideum (Social amoeba), this protein is Conserved oligomeric Golgi complex subunit 5 (cog5).